We begin with the raw amino-acid sequence, 875 residues long: Importin subunit beta-1 (875 aa).

The residue at position 1 (M1) is an N-acetylmethionine. 5 HEAT repeats span residues 2–31, 33–64, 84–122, 128–159, and 169–201; these read ELIT…AAVE, LPTF…IRLL, ANAR…EIPV, LIPQ…ICQD, and SNEI…LNSL. S12 is modified (phosphoserine). The 80-residue stretch at 21-100 folds into the Importin N-terminal domain; sequence AQKFLERAAV…KNYVLQTLGT (80 aa). K210 carries the N6-acetyllysine modification. HEAT repeat units follow at residues 211 to 246, 252 to 301, 313 to 359, 363 to 393, 401 to 437, 448 to 484, 499 to 536, 543 to 591, 599 to 638, 643 to 680, 685 to 723, 731 to 775, 785 to 828, and 830 to 872; these read ESER…IMSL, ETYM…EAAE, YAKG…TCCE, VPHV…GSIL, LKPL…ICEL, LAPL…YEAA, SSSF…EIVK, YPAV…QNVL, ALQI…VEVL, LKYM…CRAL, LPFC…TLAI, LEVV…VQGL, DVML…CTAF, and KDVL…RKLK. The essential for high affinity interaction with RPL23A stretch occupies residues 285–461; it reads VCDEEMDLAI…LQCLIEGLSA (177 aa). The interval 328–341 is IAB-binding; sequence TLTKQDENDDDDDW. The segment at 333–418 is ran-GTP binding; sequence DENDDDDDWN…MPTLIELMKD (86 aa). An N6-acetyllysine mark is found at K834 and K866.

It belongs to the importin beta family. Importin beta-1 subfamily. Forms a complex with an importin alpha subunit. Interacts with XPO1. Forms a heterodimer with IPO7. The KPNB1/IPO7 heterodimer interacts with H1 histone. Interacts with SNUPN. Interacts with H2A, H2B, H3 and H4 histones. Component of an import snRNP complex composed of KPNB1, SNUPN, SMN1 and ZNF259. Component of a nuclear export receptor complex composed of KPNB1, Ran, SNUPN and XPO1. Interacts with SRY. Interacts with PRKCI/atypical protein kinase C iota. Interacts with KPNA2. Interacts with KPNA7. Interacts with SNAI1 (via zinc fingers) and SNAI2 (via zinc fingers). Interacts with SLC35G1 and STIM1. Interacts with DCAF8. Interacts with RAN. Interacts with NUMA1 (via C-terminus); this interaction is inhibited by RanGTP. Interacts with ZBED1/hDREF; required for nuclear import of ZBED1/hDREF. Interacts with SRP19. Interacts with RPL23A (via BIB domain), RPS7 and RPL5. In terms of processing, mono-ADP-ribosylated by PARP16.

It is found in the cytoplasm. Its subcellular location is the nucleus envelope. Its function is as follows. Functions in nuclear protein import, either in association with an adapter protein, like an importin-alpha subunit, which binds to nuclear localization signals (NLS) in cargo substrates, or by acting as autonomous nuclear transport receptor. Acting autonomously, serves itself as NLS receptor. Docking of the importin/substrate complex to the nuclear pore complex (NPC) is mediated by KPNB1 through binding to nucleoporin FxFG repeats and the complex is subsequently translocated through the pore by an energy requiring, Ran-dependent mechanism. At the nucleoplasmic side of the NPC, Ran binds to importin-beta and the three components separate and importin-alpha and -beta are re-exported from the nucleus to the cytoplasm where GTP hydrolysis releases Ran from importin. The directionality of nuclear import is thought to be conferred by an asymmetric distribution of the GTP- and GDP-bound forms of Ran between the cytoplasm and nucleus. Mediates autonomously the nuclear import of ribosomal proteins RPL23A, RPS7 and RPL5. In association with IPO7, mediates the nuclear import of H1 histone. In vitro, mediates nuclear import of H2A, H2B, H3 and H4 histones. Imports MRTFA, SNAI1 and PRKCI into the nucleus. The polypeptide is Importin subunit beta-1 (Kpnb1) (Rattus norvegicus (Rat)).